The sequence spans 184 residues: LPS-assembly lipoprotein LptE (184 aa).

An N-terminal signal peptide occupies residues 1-19 (MRHRLFTLVLGLAVLITAG). Cysteine 20 carries the N-palmitoyl cysteine lipid modification. The S-diacylglycerol cysteine moiety is linked to residue cysteine 20.

The protein belongs to the LptE lipoprotein family. In terms of assembly, component of the lipopolysaccharide transport and assembly complex. Interacts with LptD.

The protein resides in the cell outer membrane. Its function is as follows. Together with LptD, is involved in the assembly of lipopolysaccharide (LPS) at the surface of the outer membrane. Required for the proper assembly of LptD. Binds LPS and may serve as the LPS recognition site at the outer membrane. This Pectobacterium atrosepticum (strain SCRI 1043 / ATCC BAA-672) (Erwinia carotovora subsp. atroseptica) protein is LPS-assembly lipoprotein LptE.